Consider the following 136-residue polypeptide: Large-conductance mechanosensitive channel (136 aa).

The Cytoplasmic segment spans residues 1 to 16 (MGLLSEFKAFAVKGNV). The chain crosses the membrane as a helical span at residues 17 to 45 (VDMAVGIIIGAAFGKIVSSFVGDVIMPPI). Over 46 to 73 (GLLIGGVDFSDLAITLKAEGDVPAVVLA) the chain is Extracellular. A helical membrane pass occupies residues 74-93 (YRKFIQTVLNFVIVAFAIFM). Over 94–136 (GVKAINRLKREEAVAPSEPPVPSAEETLLTEIRDLLKAQQNKS) the chain is Cytoplasmic.

This sequence belongs to the MscL family. In terms of assembly, homopentamer.

Its subcellular location is the cell inner membrane. In terms of biological role, channel that opens in response to stretch forces in the membrane lipid bilayer. Forms a nonselective ion channel with a conductance of about 4 nanosiemens. May participate in the regulation of osmotic pressure changes within the cell. This chain is Large-conductance mechanosensitive channel, found in Pseudomonas fluorescens.